Reading from the N-terminus, the 848-residue chain is Probable serine/threonine-protein kinase DDB_G0278535 (848 aa).

3 stretches are compositionally biased toward low complexity: residues 1 to 52 (MNKS…NNNH), 60 to 85 (TAATTTTSTTGTGTTAATTSTSTSST), and 95 to 116 (TSNSNLATATNTPSSSPQVSTS). The segment at 1 to 117 (MNKSSSASTV…SSSPQVSTSV (117 aa)) is disordered. ANK repeat units lie at residues 181 to 212 (MDQTPLCAALRNGSHDIVREILFFYQSNKMDI), 218 to 248 (SGYTPLHVAASHCDDQILMLLLNYEGINVNI), 252 to 285 (DKNSALHYFCQKFRSPNCQEPFSIFLKKGVNVNA), 289 to 320 (NGETPLHKSIFNNTVRLLMVNMLLDAGAEVNV), and 324 to 353 (RGESPLHFAVRLGREDLVSVLVKAGADITI). The 64-residue stretch at 378 to 441 (KNVQDIFNWL…IRNCRILRDQ (64 aa)) folds into the SAM domain. The interval 448 to 478 (NSNVTTGSGSSGSTTTTTTTTTTTSGCGGLN) is disordered. Over residues 452 to 472 (TTGSGSSGSTTTTTTTTTTTS) the composition is skewed to low complexity. The Protein kinase domain maps to 529-799 (LEYTLKLGSG…TLNRLRHEYM (271 aa)). ATP-binding positions include 535–543 (LGSGSSGKV) and lysine 556. Residue aspartate 650 is the Proton acceptor of the active site. The disordered stretch occupies residues 810–848 (RKLPSLSPPPQPTTTTTTTTSSSTSTNNINNNINNNNNT). Positions 822 to 848 (TTTTTTTTSSSTSTNNINNNINNNNNT) are enriched in low complexity.

It belongs to the protein kinase superfamily. TKL Ser/Thr protein kinase family.

It catalyses the reaction L-seryl-[protein] + ATP = O-phospho-L-seryl-[protein] + ADP + H(+). It carries out the reaction L-threonyl-[protein] + ATP = O-phospho-L-threonyl-[protein] + ADP + H(+). The sequence is that of Probable serine/threonine-protein kinase DDB_G0278535 from Dictyostelium discoideum (Social amoeba).